The following is a 144-amino-acid chain: Ribosomal RNA large subunit methyltransferase H (144 aa).

Residues L63, G92, and 111 to 116 each bind S-adenosyl-L-methionine; that span reads LSPLTF.

The protein belongs to the RNA methyltransferase RlmH family. In terms of assembly, homodimer.

Its subcellular location is the cytoplasm. It catalyses the reaction pseudouridine(1915) in 23S rRNA + S-adenosyl-L-methionine = N(3)-methylpseudouridine(1915) in 23S rRNA + S-adenosyl-L-homocysteine + H(+). In terms of biological role, specifically methylates the pseudouridine at position 1915 (m3Psi1915) in 23S rRNA. This chain is Ribosomal RNA large subunit methyltransferase H, found in Synechococcus sp. (strain CC9902).